The following is a 286-amino-acid chain: Undecaprenyl-diphosphatase (286 aa).

A run of 7 helical transmembrane segments spans residues 43–63 (FWKM…PIYF), 91–111 (LTII…KIIG), 118–138 (IIMG…DVMF), 150–170 (MSVG…VFPG), 189–209 (AAAL…ATCY), 236–256 (ITLA…VAWF), and 264–284 (GFVP…AWAL).

The protein belongs to the UppP family.

The protein localises to the cell inner membrane. It carries out the reaction di-trans,octa-cis-undecaprenyl diphosphate + H2O = di-trans,octa-cis-undecaprenyl phosphate + phosphate + H(+). Catalyzes the dephosphorylation of undecaprenyl diphosphate (UPP). Confers resistance to bacitracin. The sequence is that of Undecaprenyl-diphosphatase from Koribacter versatilis (strain Ellin345).